Here is a 314-residue protein sequence, read N- to C-terminus: Porphobilinogen deaminase (314 aa).

The residue at position 241 (Cys-241) is an S-(dipyrrolylmethanemethyl)cysteine.

The protein belongs to the HMBS family. As to quaternary structure, monomer. Requires dipyrromethane as cofactor.

The catalysed reaction is 4 porphobilinogen + H2O = hydroxymethylbilane + 4 NH4(+). The protein operates within porphyrin-containing compound metabolism; protoporphyrin-IX biosynthesis; coproporphyrinogen-III from 5-aminolevulinate: step 2/4. It functions in the pathway porphyrin-containing compound metabolism; chlorophyll biosynthesis. Functionally, tetrapolymerization of the monopyrrole PBG into the hydroxymethylbilane pre-uroporphyrinogen in several discrete steps. The polypeptide is Porphobilinogen deaminase (Chloroherpeton thalassium (strain ATCC 35110 / GB-78)).